Consider the following 530-residue polypeptide: Chaperonin GroEL (530 aa).

Residues 30–33 (TLGP), K51, 87–91 (DGTTT), G415, and D495 contribute to the ATP site.

The protein belongs to the chaperonin (HSP60) family. In terms of assembly, forms a cylinder of 14 subunits composed of two heptameric rings stacked back-to-back. Interacts with the co-chaperonin GroES.

It is found in the cytoplasm. It carries out the reaction ATP + H2O + a folded polypeptide = ADP + phosphate + an unfolded polypeptide.. Its function is as follows. Together with its co-chaperonin GroES, plays an essential role in assisting protein folding. The GroEL-GroES system forms a nano-cage that allows encapsulation of the non-native substrate proteins and provides a physical environment optimized to promote and accelerate protein folding. This is Chaperonin GroEL from Carsonella ruddii (strain PV).